Here is a 207-residue protein sequence, read N- to C-terminus: Large ribosomal subunit protein uL4 (207 aa).

Residues 49–78 (HAVKNRSAVSGGGRKPWRQKGTGRARQGSI) form a disordered region.

The protein belongs to the universal ribosomal protein uL4 family. In terms of assembly, part of the 50S ribosomal subunit.

Its function is as follows. One of the primary rRNA binding proteins, this protein initially binds near the 5'-end of the 23S rRNA. It is important during the early stages of 50S assembly. It makes multiple contacts with different domains of the 23S rRNA in the assembled 50S subunit and ribosome. In terms of biological role, forms part of the polypeptide exit tunnel. This chain is Large ribosomal subunit protein uL4 (rplD), found in Streptococcus pyogenes serotype M1.